Here is a 728-residue protein sequence, read N- to C-terminus: Rho-related BTB domain-containing protein 2 (728 aa).

The rho-like stretch occupies residues 1–210; that stretch reads MDSDMDYERP…DNAIRAALIS (210 aa). Residues 21–28, 84–88, and 140–143 contribute to the GTP site; these read GDNAVGKT, DTFGD, and CQLD. 2 consecutive BTB domains span residues 266–333 and 500–567; these read ADVI…HHHH and SDVT…TSSP. A compositionally biased stretch (gly residues) spans 304–313; it reads ELGGPSGSGG. Positions 304 to 333 are disordered; the sequence is ELGGPSGSGGPRPEDHRSHPEQHHHHHHHH. Basic and acidic residues predominate over residues 315-324; sequence RPEDHRSHPE. The segment at 703–728 is disordered; sequence FWNSPSSPSSSAAGSASPSSSSSAVV. The span at 706 to 728 shows a compositional bias: low complexity; that stretch reads SPSSPSSSAAGSASPSSSSSAVV.

It belongs to the small GTPase superfamily. Rho family. Interacts with HSP90AA1 and HSP90AB1. Forms a complex with CUL3 and RBX1. Interacts (via BTB 1 domain) with CUL3. Interacts with MSI2. Post-translationally, autoubiquitinated by RHOBTB2-CUL3-RBX1 ubiquitin ligase complex. As to expression, expressed in most tissues, with highest expression in brain.

In terms of biological role, regulator of cell proliferation and apoptosis. It likely functions as a substrate-adapter that recruits key substrates, e.g. MSI2, to CUL3-based ubiquitin ligase complexes for degradation. Required for MSI2 ubiquitination and degradation. This chain is Rho-related BTB domain-containing protein 2 (Rhobtb2), found in Mus musculus (Mouse).